The chain runs to 86 residues: Small ribosomal subunit protein eS27y (86 aa).

The C4-type zinc-finger motif lies at 39–61 (CQGCFNITTVFSHSQTVVVCGNC).

The protein belongs to the eukaryotic ribosomal protein eS27 family. Zn(2+) is required as a cofactor.

Its function is as follows. May be involved in the elimination of damaged mRNA after UV irradiation. The protein is Small ribosomal subunit protein eS27y (RPS27B) of Arabidopsis thaliana (Mouse-ear cress).